We begin with the raw amino-acid sequence, 602 residues long: Sulfite reductase [NADPH] hemoprotein beta-component (602 aa).

Residues 1–15 (MDDHKTASPPRERSY) are compositionally biased toward basic and acidic residues. Positions 1-24 (MDDHKTASPPRERSYETPPAERPI) are disordered. [4Fe-4S] cluster-binding residues include cysteine 458, cysteine 464, cysteine 503, and cysteine 507. Residue cysteine 507 participates in siroheme binding.

The protein belongs to the nitrite and sulfite reductase 4Fe-4S domain family. In terms of assembly, alpha(8)-beta(8). The alpha component is a flavoprotein, the beta component is a hemoprotein. Siroheme is required as a cofactor. [4Fe-4S] cluster serves as cofactor.

It catalyses the reaction hydrogen sulfide + 3 NADP(+) + 3 H2O = sulfite + 3 NADPH + 4 H(+). It participates in sulfur metabolism; hydrogen sulfide biosynthesis; hydrogen sulfide from sulfite (NADPH route): step 1/1. Component of the sulfite reductase complex that catalyzes the 6-electron reduction of sulfite to sulfide. This is one of several activities required for the biosynthesis of L-cysteine from sulfate. This Methylobacterium nodulans (strain LMG 21967 / CNCM I-2342 / ORS 2060) protein is Sulfite reductase [NADPH] hemoprotein beta-component.